The chain runs to 115 residues: Large ribosomal subunit protein bL20 (115 aa).

This sequence belongs to the bacterial ribosomal protein bL20 family.

Functionally, binds directly to 23S ribosomal RNA and is necessary for the in vitro assembly process of the 50S ribosomal subunit. It is not involved in the protein synthesizing functions of that subunit. The polypeptide is Large ribosomal subunit protein bL20 (Pelodictyon phaeoclathratiforme (strain DSM 5477 / BU-1)).